The primary structure comprises 350 residues: MQINHWQYLSSKPESTGIFKQQPDDFVVQEILGYEPVGEGEHIYLWVRKEGLNTAYLAEQIAKFAQLPLRAVTYAGRKDKHSVSEQWFGVHKPGKAEYDWSALNVPGATVLKAIRHNKKLRTGVLKGNKFTILMRDVTPSDDLAQRIAQVSLSGAPNYYGPQRFGDSRYDPKGSNLMLAEKMINGEVIRNRNKRSMAISALRSWLFNEVLSERINAGDFAQPLEGDVMSLAGNASYFVSDDIDDTIKQRLATRDITISAPLWGKGELASTGSALAFEKSVVMNHPKITKTLASLGLEQERRPIVLYPSNLTWAWEQNNLRIAFELPAGTFATSVLREILNVESVDTGPSE.

The Nucleophile role is filled by Asp-79. One can recognise a TRUD domain in the interval 154 to 306 (GAPNYYGPQR…EQERRPIVLY (153 aa)).

This sequence belongs to the pseudouridine synthase TruD family.

The enzyme catalyses uridine(13) in tRNA = pseudouridine(13) in tRNA. Responsible for synthesis of pseudouridine from uracil-13 in transfer RNAs. The protein is tRNA pseudouridine synthase D of Pseudoalteromonas atlantica (strain T6c / ATCC BAA-1087).